We begin with the raw amino-acid sequence, 325 residues long: All-trans-nonaprenyl-diphosphate synthase (geranyl-diphosphate specific) (325 aa).

Isopentenyl diphosphate-binding residues include Lys-48, Arg-51, and His-81. The Mg(2+) site is built by Asp-88 and Asp-92. Arg-97 lines the an all-trans-polyprenyl diphosphate pocket. Arg-98 lines the isopentenyl diphosphate pocket. An all-trans-polyprenyl diphosphate-binding residues include Lys-174, Thr-175, Gln-211, and Lys-228.

It belongs to the FPP/GGPP synthase family. In terms of assembly, homodimer. Mg(2+) serves as cofactor.

It catalyses the reaction 7 isopentenyl diphosphate + (2E)-geranyl diphosphate = all-trans-nonaprenyl diphosphate + 7 diphosphate. In terms of biological role, catalyzes the sequential condensation of isopentenyl diphosphate (IPP) with the allylic substrate to give solanesyl diphosphate. Could be important to determine the side chain length of ubiquinone. This Rhodobacter capsulatus (Rhodopseudomonas capsulata) protein is All-trans-nonaprenyl-diphosphate synthase (geranyl-diphosphate specific) (sdsA).